Consider the following 600-residue polypeptide: NADH-quinone oxidoreductase subunit C/D (600 aa).

The NADH dehydrogenase I subunit C stretch occupies residues 1–190 (MVNNMTDLTA…SPFELTKAKQ (190 aa)). The segment at 214 to 600 (DFMFLNLGPN…IDFVMSDVDR (387 aa)) is NADH dehydrogenase I subunit D.

It in the N-terminal section; belongs to the complex I 30 kDa subunit family. This sequence in the C-terminal section; belongs to the complex I 49 kDa subunit family. As to quaternary structure, NDH-1 is composed of 13 different subunits. Subunits NuoB, CD, E, F, and G constitute the peripheral sector of the complex.

The protein localises to the cell inner membrane. The catalysed reaction is a quinone + NADH + 5 H(+)(in) = a quinol + NAD(+) + 4 H(+)(out). Functionally, NDH-1 shuttles electrons from NADH, via FMN and iron-sulfur (Fe-S) centers, to quinones in the respiratory chain. The immediate electron acceptor for the enzyme in this species is believed to be ubiquinone. Couples the redox reaction to proton translocation (for every two electrons transferred, four hydrogen ions are translocated across the cytoplasmic membrane), and thus conserves the redox energy in a proton gradient. In Escherichia coli O6:H1 (strain CFT073 / ATCC 700928 / UPEC), this protein is NADH-quinone oxidoreductase subunit C/D.